Consider the following 252-residue polypeptide: Mediator of RNA polymerase II transcription subunit 4 (252 aa).

Residues 70 to 112 (KIHQEMQVLEKEVEKRDSDIQQLQKQLKEAEHILATAVYQAKE) are a coiled coil. Positions 218-252 (HSNEFLMESLGPNKENEEDVEVMSTDSSSSSSDSD) are disordered. Residues 241 to 252 (STDSSSSSSDSD) are compositionally biased toward low complexity.

This sequence belongs to the Mediator complex subunit 4 family. Component of the Mediator complex.

It localises to the nucleus. Its function is as follows. Component of the Mediator complex, a coactivator involved in the regulated transcription of nearly all RNA polymerase II-dependent genes. Mediator functions as a bridge to convey information from gene-specific regulatory proteins to the basal RNA polymerase II transcription machinery. Mediator is recruited to promoters by direct interactions with regulatory proteins and serves as a scaffold for the assembly of a functional preinitiation complex with RNA polymerase II and the general transcription factors. This is Mediator of RNA polymerase II transcription subunit 4 (med4) from Xenopus tropicalis (Western clawed frog).